The sequence spans 205 residues: Spermatogenesis-associated protein 24 (205 aa).

Positions 17 to 166 form a coiled coil; sequence LAFDQLRDVI…QQRQSFRNHM (150 aa). The required for interaction with CBX5 and TBPL1 stretch occupies residues 138–185; that stretch reads EDILNGKENEIKELQQVISQQRQSFRNHMSDFRIQKQQETYMAQVLDQ. The disordered stretch occupies residues 182–205; that stretch reads VLDQKHKKTSGTRRARSRQCSREK. Residues 186–205 show a composition bias toward basic residues; sequence KHKKTSGTRRARSRQCSREK.

The protein belongs to the SPATA24 family. As to quaternary structure, homodimer. Interacts with CBX3, CBX5, GMNN, GTF2B, TBPL1 and the polycomb proteins PHCF2, RNF2 and SCMH1 but not with CBX1 or PCGF2. Highly expressed in the testis and is mainly localized in the spermatids. Also expressed in the lung, heart, spleen and epididymis.

It is found in the cytoplasm. The protein resides in the nucleus. It localises to the nucleolus. The protein localises to the nucleoplasm. Functionally, binds DNA with high affinity but does not bind to TATA boxes. Synergises with GMNN and TBP in activation of TATA box-containing promoters and with GMNN and TBPL1 in activation of the NF1 TATA-less promoter. May play a role in cytoplasm movement and removal during spermiogenesis. This chain is Spermatogenesis-associated protein 24 (Spata24), found in Rattus norvegicus (Rat).